A 217-amino-acid polypeptide reads, in one-letter code: Transmembrane emp24 domain-containing protein p24delta6 (217 aa).

A signal peptide spans Met1–Ala26. The Lumenal portion of the chain corresponds to Ile27–Asn186. The GOLD domain occupies Glu36–Arg152. N-linked (GlcNAc...) asparagine glycosylation is found at Asn84 and Asn116. The stretch at Ala138–Ile160 forms a coiled coil. 2 positions are modified to omega-N-methylated arginine: Arg170 and Arg175. The chain crosses the membrane as a helical span at residues Gln187–Leu207. Residues Lys208–Ile217 lie on the Cytoplasmic side of the membrane. The short motif at Tyr210–Phe211 is the COPII vesicle coat-binding element. Residues Tyr210–Ile217 carry the COPI vesicle coat-binding motif.

Belongs to the EMP24/GP25L family. As to quaternary structure, probably oligomerizes with other members of the EMP24/GP25L family. Associates with the COPI vesicle coat (coatomer). Associates with the COPII vesicle coat (coatomer).

It localises to the endoplasmic reticulum membrane. Its function is as follows. Involved in vesicular protein trafficking. Mainly functions in the early secretory pathway. Thought to act as cargo receptor at the lumenal side for incorporation of secretory cargo molecules into transport vesicles and to be involved in vesicle coat formation at the cytoplasmic side. This is Transmembrane emp24 domain-containing protein p24delta6 from Arabidopsis thaliana (Mouse-ear cress).